The primary structure comprises 542 residues: Phosphoglucomutase (542 aa).

Residues Thr-17, Arg-21, Ser-112–His-113, and Lys-125 contribute to the substrate site. Ser-112 functions as the Phosphoserine intermediate in the catalytic mechanism. Residue Ser-112 coordinates Mg(2+). The Mg(2+) site is built by Asp-276, Asp-278, and Asp-280. Residues Asp-280–Arg-281, Thr-343, Glu-362–Ser-364, Lys-375, and Arg-495 each bind substrate.

This sequence belongs to the phosphohexose mutase family. Mg(2+) serves as cofactor.

The catalysed reaction is alpha-D-glucose 1-phosphate = alpha-D-glucose 6-phosphate. Its function is as follows. This enzyme participates in both the breakdown and synthesis of glucose. Required for the synthesis of capsular polysaccharide and normal lipopolysaccharide. The chain is Phosphoglucomutase (pgm) from Rhizobium radiobacter (Agrobacterium tumefaciens).